The following is a 214-amino-acid chain: Probable GTP-binding protein EngB (214 aa).

One can recognise an EngB-type G domain in the interval 30 to 204 (EGFEVAFAGR…YTVLAGWMEL (175 aa)). GTP is bound by residues 38 to 45 (GRSNAGKS), 64 to 68 (GRTQL), 82 to 85 (DLPG), 149 to 152 (TKAD), and 182 to 185 (LFSA). Residues Ser-45 and Thr-66 each coordinate Mg(2+).

The protein belongs to the TRAFAC class TrmE-Era-EngA-EngB-Septin-like GTPase superfamily. EngB GTPase family. It depends on Mg(2+) as a cofactor.

Necessary for normal cell division and for the maintenance of normal septation. The protein is Probable GTP-binding protein EngB of Pseudomonas fluorescens (strain Pf0-1).